Here is a 184-residue protein sequence, read N- to C-terminus: ATP-dependent protease subunit HslV (184 aa).

The active site involves Thr12. Positions 166, 169, and 172 each coordinate Na(+).

It belongs to the peptidase T1B family. HslV subfamily. A double ring-shaped homohexamer of HslV is capped on each side by a ring-shaped HslU homohexamer. The assembly of the HslU/HslV complex is dependent on binding of ATP.

It localises to the cytoplasm. The enzyme catalyses ATP-dependent cleavage of peptide bonds with broad specificity.. With respect to regulation, allosterically activated by HslU binding. In terms of biological role, protease subunit of a proteasome-like degradation complex believed to be a general protein degrading machinery. The chain is ATP-dependent protease subunit HslV from Brucella anthropi (strain ATCC 49188 / DSM 6882 / CCUG 24695 / JCM 21032 / LMG 3331 / NBRC 15819 / NCTC 12168 / Alc 37) (Ochrobactrum anthropi).